A 198-amino-acid chain; its full sequence is Probable GTP-binding protein EngB (198 aa).

Residues 22–195 (DLPEIALAGR…WKAIHKFTKT (174 aa)) enclose the EngB-type G domain. GTP-binding positions include 30-37 (GRSNVGKS), 57-61 (GKTQT), 75-78 (DVPG), 142-145 (TKAD), and 174-176 (FSS). The Mg(2+) site is built by Ser-37 and Thr-59.

The protein belongs to the TRAFAC class TrmE-Era-EngA-EngB-Septin-like GTPase superfamily. EngB GTPase family. Mg(2+) is required as a cofactor.

Its function is as follows. Necessary for normal cell division and for the maintenance of normal septation. In Bacillus cytotoxicus (strain DSM 22905 / CIP 110041 / 391-98 / NVH 391-98), this protein is Probable GTP-binding protein EngB.